The following is a 203-amino-acid chain: ATP-dependent Clp protease proteolytic subunit 2 (203 aa).

Catalysis depends on Ser-100, which acts as the Nucleophile. Residue His-125 is part of the active site.

It belongs to the peptidase S14 family. In terms of assembly, fourteen ClpP subunits assemble into 2 heptameric rings which stack back to back to give a disk-like structure with a central cavity, resembling the structure of eukaryotic proteasomes.

The protein localises to the cytoplasm. It catalyses the reaction Hydrolysis of proteins to small peptides in the presence of ATP and magnesium. alpha-casein is the usual test substrate. In the absence of ATP, only oligopeptides shorter than five residues are hydrolyzed (such as succinyl-Leu-Tyr-|-NHMec, and Leu-Tyr-Leu-|-Tyr-Trp, in which cleavage of the -Tyr-|-Leu- and -Tyr-|-Trp bonds also occurs).. In terms of biological role, cleaves peptides in various proteins in a process that requires ATP hydrolysis. Has a chymotrypsin-like activity. Plays a major role in the degradation of misfolded proteins. This is ATP-dependent Clp protease proteolytic subunit 2 from Thermobifida fusca (strain YX).